Consider the following 131-residue polypeptide: Small ribosomal subunit protein uS12 (131 aa).

Asp89 carries the post-translational modification 3-methylthioaspartic acid.

It belongs to the universal ribosomal protein uS12 family. As to quaternary structure, part of the 30S ribosomal subunit. Contacts proteins S8 and S17. May interact with IF1 in the 30S initiation complex.

Its function is as follows. With S4 and S5 plays an important role in translational accuracy. In terms of biological role, interacts with and stabilizes bases of the 16S rRNA that are involved in tRNA selection in the A site and with the mRNA backbone. Located at the interface of the 30S and 50S subunits, it traverses the body of the 30S subunit contacting proteins on the other side and probably holding the rRNA structure together. The combined cluster of proteins S8, S12 and S17 appears to hold together the shoulder and platform of the 30S subunit. This chain is Small ribosomal subunit protein uS12, found in Karelsulcia muelleri (strain GWSS) (Sulcia muelleri).